A 326-amino-acid polypeptide reads, in one-letter code: tRNA-modifying protein YgfZ (326 aa).

Residues tryptophan 27 and tryptophan 189 each coordinate folate.

This sequence belongs to the tRNA-modifying YgfZ family.

Its subcellular location is the cytoplasm. Functionally, folate-binding protein involved in regulating the level of ATP-DnaA and in the modification of some tRNAs. It is probably a key factor in regulatory networks that act via tRNA modification, such as initiation of chromosomal replication. The polypeptide is tRNA-modifying protein YgfZ (Salmonella arizonae (strain ATCC BAA-731 / CDC346-86 / RSK2980)).